Consider the following 169-residue polypeptide: Allophycocyanin subunit beta-18 (169 aa).

Asparagine 72 carries the N4-methylasparagine modification. Residue cysteine 82 coordinates (2R,3E)-phycocyanobilin.

It belongs to the phycobiliprotein family. Heterodimer of ApcE and this beta chain. In terms of processing, contains one covalently linked bilin chromophore. The chromophore is added by phycocyanobilin lyase CpcUS.

It is found in the cellular thylakoid membrane. A variant beta-allophycocyanin (AP) which forms a complex with ApcE, a phycobilisome terminal emitter that influences energy transfer to photosystem II. This chain is Allophycocyanin subunit beta-18 (apcF), found in Picosynechococcus sp. (strain ATCC 27264 / PCC 7002 / PR-6) (Agmenellum quadruplicatum).